We begin with the raw amino-acid sequence, 415 residues long: Histidine--tRNA ligase (415 aa).

The protein belongs to the class-II aminoacyl-tRNA synthetase family. In terms of assembly, homodimer.

It is found in the cytoplasm. The enzyme catalyses tRNA(His) + L-histidine + ATP = L-histidyl-tRNA(His) + AMP + diphosphate + H(+). This chain is Histidine--tRNA ligase, found in Rickettsia canadensis (strain McKiel).